Here is a 422-residue protein sequence, read N- to C-terminus: Proline--tRNA ligase (422 aa).

It belongs to the class-II aminoacyl-tRNA synthetase family. ProS type 2 subfamily. Homodimer.

The protein localises to the cytoplasm. It carries out the reaction tRNA(Pro) + L-proline + ATP = L-prolyl-tRNA(Pro) + AMP + diphosphate. Catalyzes the attachment of proline to tRNA(Pro) in a two-step reaction: proline is first activated by ATP to form Pro-AMP and then transferred to the acceptor end of tRNA(Pro). This is Proline--tRNA ligase from Wolbachia pipientis wMel.